A 139-amino-acid polypeptide reads, in one-letter code: Ribonuclease P protein component (139 aa).

Residues 120–139 (KATTGGECTPKSEKCVTAPR) are disordered.

Belongs to the RnpA family. Consists of a catalytic RNA component (M1 or rnpB) and a protein subunit.

The enzyme catalyses Endonucleolytic cleavage of RNA, removing 5'-extranucleotides from tRNA precursor.. Functionally, RNaseP catalyzes the removal of the 5'-leader sequence from pre-tRNA to produce the mature 5'-terminus. It can also cleave other RNA substrates such as 4.5S RNA. The protein component plays an auxiliary but essential role in vivo by binding to the 5'-leader sequence and broadening the substrate specificity of the ribozyme. This chain is Ribonuclease P protein component, found in Chlamydia pneumoniae (Chlamydophila pneumoniae).